A 176-amino-acid chain; its full sequence is NAD(P)H-quinone oxidoreductase subunit 6, chloroplastic (176 aa).

A run of 5 helical transmembrane segments spans residues 10–30 (ILLV…VLLT), 32–52 (PIYS…FHIP), 61–81 (AQLL…VMFM), 107–127 (ILFS…IWTT), and 152–172 (FYLP…GAIA).

It belongs to the complex I subunit 6 family. NDH is composed of at least 16 different subunits, 5 of which are encoded in the nucleus.

The protein resides in the plastid. It localises to the chloroplast thylakoid membrane. The catalysed reaction is a plastoquinone + NADH + (n+1) H(+)(in) = a plastoquinol + NAD(+) + n H(+)(out). It carries out the reaction a plastoquinone + NADPH + (n+1) H(+)(in) = a plastoquinol + NADP(+) + n H(+)(out). Its function is as follows. NDH shuttles electrons from NAD(P)H:plastoquinone, via FMN and iron-sulfur (Fe-S) centers, to quinones in the photosynthetic chain and possibly in a chloroplast respiratory chain. The immediate electron acceptor for the enzyme in this species is believed to be plastoquinone. Couples the redox reaction to proton translocation, and thus conserves the redox energy in a proton gradient. The sequence is that of NAD(P)H-quinone oxidoreductase subunit 6, chloroplastic (ndhG) from Calycanthus floridus var. glaucus (Eastern sweetshrub).